The chain runs to 969 residues: Isoleucine--tRNA ligase (969 aa).

The 'HIGH' region signature appears at 70–80 (PYANGAIHIGH). Glutamate 601 serves as a coordination point for L-isoleucyl-5'-AMP. Positions 642 to 646 (KMSKS) match the 'KMSKS' region motif. Lysine 645 contacts ATP.

The protein belongs to the class-I aminoacyl-tRNA synthetase family. IleS type 1 subfamily. In terms of assembly, monomer.

The protein resides in the cytoplasm. It carries out the reaction tRNA(Ile) + L-isoleucine + ATP = L-isoleucyl-tRNA(Ile) + AMP + diphosphate. Catalyzes the attachment of isoleucine to tRNA(Ile). As IleRS can inadvertently accommodate and process structurally similar amino acids such as valine, to avoid such errors it has two additional distinct tRNA(Ile)-dependent editing activities. One activity is designated as 'pretransfer' editing and involves the hydrolysis of activated Val-AMP. The other activity is designated 'posttransfer' editing and involves deacylation of mischarged Val-tRNA(Ile). The polypeptide is Isoleucine--tRNA ligase (Caulobacter vibrioides (strain ATCC 19089 / CIP 103742 / CB 15) (Caulobacter crescentus)).